A 293-amino-acid polypeptide reads, in one-letter code: GTPase Era (293 aa).

One can recognise an Era-type G domain in the interval 2 to 168 (KILFSTIIGR…INEIKKYSYE (167 aa)). Residues 10–17 (GRPNVGKS) are G1. 10–17 (GRPNVGKS) lines the GTP pocket. The segment at 36-40 (QATRD) is G2. The interval 57 to 60 (DTPG) is G3. Residues 57–61 (DTPGI) and 118–121 (TKID) each bind GTP. Positions 118 to 121 (TKID) are G4. Positions 147 to 149 (ISS) are G5. A KH type-2 domain is found at 199–279 (LEQELPHSIL…KLFLKIKVKK (81 aa)).

The protein belongs to the TRAFAC class TrmE-Era-EngA-EngB-Septin-like GTPase superfamily. Era GTPase family. As to quaternary structure, monomer.

The protein resides in the cytoplasm. It is found in the cell membrane. In terms of biological role, an essential GTPase that binds both GDP and GTP, with rapid nucleotide exchange. Plays a role in 16S rRNA processing and 30S ribosomal subunit biogenesis and possibly also in cell cycle regulation and energy metabolism. The chain is GTPase Era from Mycoplasmopsis pulmonis (strain UAB CTIP) (Mycoplasma pulmonis).